A 289-amino-acid chain; its full sequence is Porin (289 aa).

Homotrimer.

The protein resides in the cell outer membrane. In terms of biological role, forms channels that allow the passive diffusion of small hydrophilic solutes up to an exclusion limit of about 0.6 kDa. The polypeptide is Porin (opmA) (Fuscovulum blasticum (Rhodobacter blasticus)).